A 554-amino-acid polypeptide reads, in one-letter code: Trimethyltridecatetraene synthase (554 aa).

The helical transmembrane segment at M1–S21 threads the bilayer. C464 is a heme binding site.

Belongs to the cytochrome P450 family. Heme serves as cofactor.

It localises to the membrane. It carries out the reaction (6E,10E)-geranyllinalool + reduced [NADPH--hemoprotein reductase] + O2 = (3E,7E)-4,8,12-trimethyltrideca 1,3,7,11-tetraene + but-3-en-2-one + oxidized [NADPH--hemoprotein reductase] + 2 H2O + H(+). Its pathway is secondary metabolite biosynthesis; terpenoid biosynthesis. Its function is as follows. Component of the volatile terpenes biosynthesis pathways. Converts mainly geranyllinalool to trimethyltridecatetraene (TMTT). The sequence is that of Trimethyltridecatetraene synthase from Zea mays (Maize).